Reading from the N-terminus, the 111-residue chain is uncharacterized protein (111 aa).

This is an uncharacterized protein from Escherichia coli (strain K12).